Here is a 357-residue protein sequence, read N- to C-terminus: DnaJ homolog subfamily C member 25 (357 aa).

Residues 19-39 form a helical membrane-spanning segment; sequence WLLLAPLLLVPLLARPAEALV. The J domain occupies 48–121; it reads DCYEVLGVSR…ETRKDYDYML (74 aa). 2 helical membrane-spanning segments follow: residues 147-167 and 241-261; these read VVIL…WWNS and LLLF…AWYC.

Belongs to the DNAJC25 family.

The protein resides in the membrane. In Mus musculus (Mouse), this protein is DnaJ homolog subfamily C member 25 (Dnajc25).